We begin with the raw amino-acid sequence, 261 residues long: uncharacterized protein (261 aa).

The disordered stretch occupies residues 1 to 22; it reads MAETTEPPSDAGTSQADAMALA. The helical transmembrane segment at 107–127 threads the bilayer; the sequence is IAMAAAVVIICGFTGLSGYIV.

The protein to M.tuberculosis Rv1362c.

It is found in the membrane. This is an uncharacterized protein from Mycobacterium tuberculosis (strain ATCC 25618 / H37Rv).